Reading from the N-terminus, the 150-residue chain is UPF0756 membrane protein NTHI1233 (150 aa).

4 helical membrane-spanning segments follow: residues 1 to 21 (MTLQ…LGVL), 52 to 72 (YGVK…LVSG), 81 to 101 (GFLS…AWLA), and 123 to 143 (IIGV…AGIL).

This sequence belongs to the UPF0756 family.

It is found in the cell membrane. The protein is UPF0756 membrane protein NTHI1233 of Haemophilus influenzae (strain 86-028NP).